An 85-amino-acid chain; its full sequence is Large ribosomal subunit protein bL27 (85 aa).

It belongs to the bacterial ribosomal protein bL27 family.

The chain is Large ribosomal subunit protein bL27 from Stutzerimonas stutzeri (strain A1501) (Pseudomonas stutzeri).